The sequence spans 189 residues: GTPase NRas (189 aa).

Residues 10 to 18 (GAGGVGKSA) and 29 to 30 (VD) contribute to the GTP site. The Effector region motif lies at 32–40 (YDPTIEDSY). GTP is bound at residue 57-61 (DTAGQ). S89 carries the phosphoserine modification. A GTP-binding site is contributed by 116–119 (NKCD). The tract at residues 166 to 185 (YRMKKLNSSDDGTQGCMGLP) is hypervariable region. K170 participates in a covalent cross-link: Glycyl lysine isopeptide (Lys-Gly) (interchain with G-Cter in ubiquitin). C181 carries S-palmitoyl cysteine lipidation. C186 is lipidated: S-farnesyl cysteine. Residues 187–189 (VVM) constitute a propeptide, removed in mature form.

This sequence belongs to the small GTPase superfamily. Ras family. Interacts (active GTP-bound form preferentially) with RGS14. Interacts (active GTP-bound form) with RASSF7. Interacts (active GTP-bound form) with both SHOC2 and PP1c (all isoforms) to form a tertiary complex; SHOC2 and PP1c preferably bind M-Ras/MRAS, but they also bind K-Ras/KRAS, N-Ras/NRAS and H-Ras/HRAS. Palmitoylated by the ZDHHC9-GOLGA7 complex. Depalmitoylated by ABHD17A, ABHD17B and ABHD17C. A continuous cycle of de- and re-palmitoylation regulates rapid exchange between plasma membrane and Golgi. Post-translationally, acetylation at Lys-104 prevents interaction with guanine nucleotide exchange factors (GEFs). In terms of processing, ubiquitinated by the BCR(LZTR1) E3 ubiquitin ligase complex at Lys-170 in a non-degradative manner, leading to inhibit Ras signaling by decreasing Ras association with membranes. Phosphorylation at Ser-89 enhances NRAS association with its downstream effectors.

It is found in the cell membrane. It localises to the golgi apparatus membrane. The enzyme catalyses GTP + H2O = GDP + phosphate + H(+). Its activity is regulated as follows. Alternates between an inactive form bound to GDP and an active form bound to GTP. Activated by a guanine nucleotide-exchange factor (GEF) and inactivated by a GTPase-activating protein (GAP). Functionally, ras proteins bind GDP/GTP and possess intrinsic GTPase activity. The chain is GTPase NRas (NRAS) from Pongo abelii (Sumatran orangutan).